The sequence spans 754 residues: uncharacterized protein (754 aa).

Active-site charge relay system residues include Ser-585 and His-707. A disordered region spans residues 733-754 (SHAPPPSRKARSAARRSTDPVR).

It belongs to the peptidase S9A family.

This is an uncharacterized protein from Sinorhizobium fredii (strain NBRC 101917 / NGR234).